A 367-amino-acid polypeptide reads, in one-letter code: Anhydro-N-acetylmuramic acid kinase (367 aa).

Residue 13 to 20 coordinates ATP; the sequence is GTSMDGAD.

This sequence belongs to the anhydro-N-acetylmuramic acid kinase family.

It carries out the reaction 1,6-anhydro-N-acetyl-beta-muramate + ATP + H2O = N-acetyl-D-muramate 6-phosphate + ADP + H(+). It functions in the pathway amino-sugar metabolism; 1,6-anhydro-N-acetylmuramate degradation. It participates in cell wall biogenesis; peptidoglycan recycling. Its function is as follows. Catalyzes the specific phosphorylation of 1,6-anhydro-N-acetylmuramic acid (anhMurNAc) with the simultaneous cleavage of the 1,6-anhydro ring, generating MurNAc-6-P. Is required for the utilization of anhMurNAc either imported from the medium or derived from its own cell wall murein, and thus plays a role in cell wall recycling. The chain is Anhydro-N-acetylmuramic acid kinase from Neisseria meningitidis serogroup C / serotype 2a (strain ATCC 700532 / DSM 15464 / FAM18).